A 267-amino-acid chain; its full sequence is 3-methyl-2-oxobutanoate hydroxymethyltransferase (267 aa).

Residues aspartate 42 and aspartate 86 each coordinate Mg(2+). Residues aspartate 42–serine 43, aspartate 86, and lysine 116 contribute to the 3-methyl-2-oxobutanoate site. Glutamate 118 serves as a coordination point for Mg(2+). The active-site Proton acceptor is the glutamate 185.

Belongs to the PanB family. In terms of assembly, homodecamer; pentamer of dimers. Mg(2+) is required as a cofactor.

It is found in the cytoplasm. It catalyses the reaction 3-methyl-2-oxobutanoate + (6R)-5,10-methylene-5,6,7,8-tetrahydrofolate + H2O = 2-dehydropantoate + (6S)-5,6,7,8-tetrahydrofolate. It functions in the pathway cofactor biosynthesis; (R)-pantothenate biosynthesis; (R)-pantoate from 3-methyl-2-oxobutanoate: step 1/2. Functionally, catalyzes the reversible reaction in which hydroxymethyl group from 5,10-methylenetetrahydrofolate is transferred onto alpha-ketoisovalerate to form ketopantoate. The sequence is that of 3-methyl-2-oxobutanoate hydroxymethyltransferase from Parasynechococcus marenigrum (strain WH8102).